The following is a 153-amino-acid chain: Aspartate carbamoyltransferase regulatory chain (153 aa).

The Zn(2+) site is built by cysteine 110, cysteine 115, cysteine 138, and cysteine 141.

This sequence belongs to the PyrI family. Contains catalytic and regulatory chains. Requires Zn(2+) as cofactor.

Functionally, involved in allosteric regulation of aspartate carbamoyltransferase. This is Aspartate carbamoyltransferase regulatory chain from Bacteroides fragilis (strain ATCC 25285 / DSM 2151 / CCUG 4856 / JCM 11019 / LMG 10263 / NCTC 9343 / Onslow / VPI 2553 / EN-2).